The sequence spans 240 residues: tRNA pseudouridine synthase B (240 aa).

D48 serves as the catalytic Nucleophile.

This sequence belongs to the pseudouridine synthase TruB family. Type 1 subfamily.

It catalyses the reaction uridine(55) in tRNA = pseudouridine(55) in tRNA. Functionally, responsible for synthesis of pseudouridine from uracil-55 in the psi GC loop of transfer RNAs. This is tRNA pseudouridine synthase B from Bacteroides thetaiotaomicron (strain ATCC 29148 / DSM 2079 / JCM 5827 / CCUG 10774 / NCTC 10582 / VPI-5482 / E50).